Consider the following 849-residue polypeptide: Membrane protein-large ribosomal subunit bL9 fusion protein (849 aa).

A unknown region spans residues 1 to 680 (MFSKNKHNTK…TQLEGTNIKT (680 aa)). 2 consecutive transmembrane segments (helical) span residues 11 to 31 (FIVIACVIVVLILILFCFDFQ) and 64 to 84 (IIFFIFNFFGKIILASFIISF). The 129-residue stretch at 214–342 (KTLAIAMIAF…GGDQVVVNIE (129 aa)) folds into the GGDEF domain. Residues 681–849 (VTDTLKHFLK…FLNVTERKSK (169 aa)) form a large ribosomal subunit protein bL9 region.

It belongs to the bacterial ribosomal protein bL9 family.

Its subcellular location is the cell membrane. In terms of biological role, binds to the 23S rRNA. This is Membrane protein-large ribosomal subunit bL9 fusion protein from Aster yellows witches'-broom phytoplasma (strain AYWB).